Consider the following 343-residue polypeptide: Protein RecA (343 aa).

65-72 (GPESSGKT) lines the ATP pocket.

The protein belongs to the RecA family.

It localises to the cytoplasm. In terms of biological role, can catalyze the hydrolysis of ATP in the presence of single-stranded DNA, the ATP-dependent uptake of single-stranded DNA by duplex DNA, and the ATP-dependent hybridization of homologous single-stranded DNAs. It interacts with LexA causing its activation and leading to its autocatalytic cleavage. The protein is Protein RecA of Pseudoalteromonas atlantica (strain T6c / ATCC BAA-1087).